We begin with the raw amino-acid sequence, 819 residues long: Kinesin-like protein KIN-13A (819 aa).

The segment at 150–178 (EPFEPSPFIPKEMDEDDDDMLPGSQPGPS) is disordered. Residues 199 to 535 (KIKVVVRKRP…LRYADRVKSL (337 aa)) enclose the Kinesin motor domain. 289-296 (GQTGSGKT) contributes to the ATP binding site. Positions 534-729 (SLSKGSNTRK…QSEKESSCDD (196 aa)) are disordered. Positions 550-562 (TIPSSKDSSSAPS) are enriched in low complexity. Basic and acidic residues-rich tracts occupy residues 577–589 (QEKR…RKAA) and 614–631 (RGKE…ERVD). Residues 632-652 (LNSSRISYNSKPQSVQSSANL) are compositionally biased toward polar residues. A compositionally biased stretch (basic and acidic residues) spans 669-686 (YRDDKPERQSNYAKKDSG). Positions 697–719 (QQAKQLQQQQRPTSASASQNSSR) are enriched in low complexity. Residues 736 to 767 (LEEEEALIAAHRKEIENTMEIVREEMNLLAEV) adopt a coiled-coil conformation.

It belongs to the TRAFAC class myosin-kinesin ATPase superfamily. Kinesin family. KIN-13 subfamily. Ubiquitous.

It localises to the microsome. In Oryza sativa subsp. japonica (Rice), this protein is Kinesin-like protein KIN-13A.